A 449-amino-acid chain; its full sequence is Neuraminidase (449 aa).

At 1 to 6 (MNPNQK) the chain is on the intravirion side. The helical transmembrane segment at 7–27 (IITIGSICMVIGIVSLMLQIG) threads the bilayer. Positions 11–33 (GSICMVIGIVSLMLQIGNMISIW) are involved in apical transport and lipid raft association. Over 28–449 (NMISIWVSHS…GAELPFTIDK (422 aa)) the chain is Virion surface. A hypervariable stalk region region spans residues 36–70 (HSIQTGNQHQAEPISNTNFLTEKAVASVTLAGNSS). Asparagine 68 carries N-linked (GlcNAc...) asparagine; by host glycosylation. The segment at 71–449 (LCPISGWAVH…GAELPFTIDK (379 aa)) is head of neuraminidase. Disulfide bonds link cysteine 72–cysteine 397, cysteine 104–cysteine 109, cysteine 164–cysteine 211, cysteine 213–cysteine 218, cysteine 259–cysteine 272, cysteine 261–cysteine 270, cysteine 298–cysteine 315, and cysteine 401–cysteine 426. Substrate is bound at residue arginine 98. Asparagine 126 carries an N-linked (GlcNAc...) asparagine; by host glycan. Aspartate 131 functions as the Proton donor/acceptor in the catalytic mechanism. Arginine 132 is a substrate binding site. A glycan (N-linked (GlcNAc...) asparagine; by host) is linked at asparagine 215. 257 to 258 (EE) contacts substrate. Arginine 273 serves as a coordination point for substrate. Residues aspartate 274, glycine 278, and aspartate 304 each contribute to the Ca(2+) site. Arginine 348 is a binding site for substrate. Catalysis depends on tyrosine 382, which acts as the Nucleophile.

The protein belongs to the glycosyl hydrolase 34 family. As to quaternary structure, homotetramer. Ca(2+) serves as cofactor. In terms of processing, N-glycosylated.

The protein localises to the virion membrane. Its subcellular location is the host apical cell membrane. The catalysed reaction is Hydrolysis of alpha-(2-&gt;3)-, alpha-(2-&gt;6)-, alpha-(2-&gt;8)- glycosidic linkages of terminal sialic acid residues in oligosaccharides, glycoproteins, glycolipids, colominic acid and synthetic substrates.. Inhibited by the neuraminidase inhibitors zanamivir (Relenza) and oseltamivir (Tamiflu). These drugs interfere with the release of progeny virus from infected cells and are effective against all influenza strains. Resistance to neuraminidase inhibitors is quite rare. Functionally, catalyzes the removal of terminal sialic acid residues from viral and cellular glycoconjugates. Cleaves off the terminal sialic acids on the glycosylated HA during virus budding to facilitate virus release. Additionally helps virus spread through the circulation by further removing sialic acids from the cell surface. These cleavages prevent self-aggregation and ensure the efficient spread of the progeny virus from cell to cell. Otherwise, infection would be limited to one round of replication. Described as a receptor-destroying enzyme because it cleaves a terminal sialic acid from the cellular receptors. May facilitate viral invasion of the upper airways by cleaving the sialic acid moieties on the mucin of the airway epithelial cells. Likely to plays a role in the budding process through its association with lipid rafts during intracellular transport. May additionally display a raft-association independent effect on budding. Plays a role in the determination of host range restriction on replication and virulence. Sialidase activity in late endosome/lysosome traffic seems to enhance virus replication. This Influenza A virus (strain A/Chicken/Hong Kong/96.1/2002 H5N1 genotype Y) protein is Neuraminidase.